The sequence spans 423 residues: Serine hydroxymethyltransferase (423 aa).

(6S)-5,6,7,8-tetrahydrofolate-binding positions include Leu121 and 125-127 (GHL). Lys230 is modified (N6-(pyridoxal phosphate)lysine). 355 to 357 (SPF) provides a ligand contact to (6S)-5,6,7,8-tetrahydrofolate.

The protein belongs to the SHMT family. As to quaternary structure, homodimer. Pyridoxal 5'-phosphate serves as cofactor.

The protein resides in the cytoplasm. It catalyses the reaction (6R)-5,10-methylene-5,6,7,8-tetrahydrofolate + glycine + H2O = (6S)-5,6,7,8-tetrahydrofolate + L-serine. It participates in one-carbon metabolism; tetrahydrofolate interconversion. The protein operates within amino-acid biosynthesis; glycine biosynthesis; glycine from L-serine: step 1/1. In terms of biological role, catalyzes the reversible interconversion of serine and glycine with tetrahydrofolate (THF) serving as the one-carbon carrier. This reaction serves as the major source of one-carbon groups required for the biosynthesis of purines, thymidylate, methionine, and other important biomolecules. Also exhibits THF-independent aldolase activity toward beta-hydroxyamino acids, producing glycine and aldehydes, via a retro-aldol mechanism. This chain is Serine hydroxymethyltransferase, found in Hydrogenovibrio crunogenus (strain DSM 25203 / XCL-2) (Thiomicrospira crunogena).